Reading from the N-terminus, the 227-residue chain is Small heat shock protein hspG3 (227 aa).

The region spanning 31–227 (NKRVDIIPSM…SSNTIKININ (197 aa)) is the sHSP domain. Residues 119–164 (QQQQLENSNKENDEPSIEEFEEDVKSKSELNKTTLNTTENKDEDKT) form a disordered region.

It belongs to the small heat shock protein (HSP20) family.

The polypeptide is Small heat shock protein hspG3 (hspG3) (Dictyostelium discoideum (Social amoeba)).